Consider the following 176-residue polypeptide: Odorant-binding protein 2a (176 aa).

Residues 1–19 (MKSLLLTILLLGLVAVLKA) form the signal peptide. Residues Asn42 and Asn124 are each glycosylated (N-linked (GlcNAc...) asparagine). Cys79 and Cys172 are joined by a disulfide.

Belongs to the calycin superfamily. Lipocalin family. In terms of tissue distribution, expressed in the liver (at protein level). Expressed in epididymis.

It localises to the secreted. Functionally, involved in the regulation of systematic glucose homeostasis and insulin sensitivity. Involved in the regulation of liver lipid levels by positive regulation of hepatic lipogenesis and negative regulation of fatty acid beta-oxidation; via downstream transcriptional regulation of CPT1A and hepatic lipogenic program gene expression. May regulate hepatic lipogenesis and fatty acid beta-oxidation in an autocrine or paracrine manner. The protein is Odorant-binding protein 2a (Obp2a) of Mus musculus (Mouse).